Reading from the N-terminus, the 203-residue chain is Proteasome subunit beta 2 (203 aa).

The propeptide at 1 to 10 (MNLQNKILKG) is removed in mature form; by autocatalysis. The active-site Nucleophile is the threonine 11.

This sequence belongs to the peptidase T1B family. In terms of assembly, the 20S proteasome core is composed of 14 alpha and 14 beta subunits that assemble into four stacked heptameric rings, resulting in a barrel-shaped structure. The two inner rings, each composed of seven catalytic beta subunits, are sandwiched by two outer rings, each composed of seven alpha subunits. The catalytic chamber with the active sites is on the inside of the barrel. Has a gated structure, the ends of the cylinder being occluded by the N-termini of the alpha-subunits. Is capped at one or both ends by the proteasome regulatory ATPase, PAN.

The protein localises to the cytoplasm. The enzyme catalyses Cleavage of peptide bonds with very broad specificity.. The formation of the proteasomal ATPase PAN-20S proteasome complex, via the docking of the C-termini of PAN into the intersubunit pockets in the alpha-rings, triggers opening of the gate for substrate entry. Interconversion between the open-gate and close-gate conformations leads to a dynamic regulation of the 20S proteasome proteolysis activity. Component of the proteasome core, a large protease complex with broad specificity involved in protein degradation. The sequence is that of Proteasome subunit beta 2 from Sulfolobus acidocaldarius (strain ATCC 33909 / DSM 639 / JCM 8929 / NBRC 15157 / NCIMB 11770).